Reading from the N-terminus, the 190-residue chain is Orotate phosphoribosyltransferase (190 aa).

114 to 122 (EDVITTGGS) is a binding site for 5-phospho-alpha-D-ribose 1-diphosphate. Residues Thr-118 and Arg-146 each contribute to the orotate site.

It belongs to the purine/pyrimidine phosphoribosyltransferase family. PyrE subfamily. Homodimer. It depends on Mg(2+) as a cofactor.

It carries out the reaction orotidine 5'-phosphate + diphosphate = orotate + 5-phospho-alpha-D-ribose 1-diphosphate. It functions in the pathway pyrimidine metabolism; UMP biosynthesis via de novo pathway; UMP from orotate: step 1/2. Its function is as follows. Catalyzes the transfer of a ribosyl phosphate group from 5-phosphoribose 1-diphosphate to orotate, leading to the formation of orotidine monophosphate (OMP). This is Orotate phosphoribosyltransferase from Pelotomaculum thermopropionicum (strain DSM 13744 / JCM 10971 / SI).